Reading from the N-terminus, the 139-residue chain is uncharacterized protein (139 aa).

Helical transmembrane passes span 19-39, 64-84, and 89-109; these read CIIF…FILG, IFNV…FNLF, and AITI…WILG.

It is found in the cell membrane. This is an uncharacterized protein from Methanocaldococcus jannaschii (strain ATCC 43067 / DSM 2661 / JAL-1 / JCM 10045 / NBRC 100440) (Methanococcus jannaschii).